A 386-amino-acid chain; its full sequence is 2,3,4,5-tetrahydropyridine-2,6-dicarboxylate N-succinyltransferase (386 aa).

The active-site Acyl-anhydride intermediate is the E257. Residues R259, G274, S277, A300, 315–316 (DA), G323, K349, and 362–365 (RQDS) each bind succinyl-CoA.

Belongs to the type 2 tetrahydrodipicolinate N-succinyltransferase family. Homotrimer.

It is found in the cytoplasm. The enzyme catalyses (S)-2,3,4,5-tetrahydrodipicolinate + succinyl-CoA + H2O = (S)-2-succinylamino-6-oxoheptanedioate + CoA. It participates in amino-acid biosynthesis; L-lysine biosynthesis via DAP pathway; LL-2,6-diaminopimelate from (S)-tetrahydrodipicolinate (succinylase route): step 1/3. Its function is as follows. Catalyzes the conversion of the cyclic tetrahydrodipicolinate (THDP) into the acyclic N-succinyl-L-2-amino-6-oxopimelate using succinyl-CoA. This Campylobacter jejuni subsp. jejuni serotype O:2 (strain ATCC 700819 / NCTC 11168) protein is 2,3,4,5-tetrahydropyridine-2,6-dicarboxylate N-succinyltransferase.